We begin with the raw amino-acid sequence, 388 residues long: MILGWTQRIFTLLVVVTLLAACADEVVNPPKELADIEEKFSVQSSWVEVIGQGDEEKFNSLSPALWQDKIITADVDGLITAFDIKSGKVIWETNLKQPLSGGVTANAGLVAVGTKNAQVHVLDVNDGKQLWHVNVTTEVLAKPAISDGRLVVRTPDGRIFAYSLATQKQEWFYDRIIPNLTLRGTSAAVATSGVVITGFANGKMAAFNLRTGDMLWEQSISAPRGSSEISRIVDVDSTPVVYSNYLYAAGFNGFAIAMDLTNGRYLWREDASVTEELLVDARRVYLVDTKGRIVALDRITGEEVWTQEGLLYRKPTGAADNQDYVVVGDFEGYLHWLDKSTGEFVARIHLDRYGIGGTPIVTDEHVIATTRYGYIHVLENPLATSSEE.

An N-terminal signal peptide occupies residues 1 to 21; it reads MILGWTQRIFTLLVVVTLLAA. C22 carries the N-palmitoyl cysteine lipid modification. The S-diacylglycerol cysteine moiety is linked to residue C22.

This sequence belongs to the BamB family. As to quaternary structure, part of the Bam complex.

It is found in the cell outer membrane. Its function is as follows. Part of the outer membrane protein assembly complex, which is involved in assembly and insertion of beta-barrel proteins into the outer membrane. The sequence is that of Outer membrane protein assembly factor BamB from Kangiella koreensis (strain DSM 16069 / JCM 12317 / KCTC 12182 / SW-125).